The chain runs to 147 residues: Thyrotropin subunit beta (147 aa).

An N-terminal signal peptide occupies residues 1–20 (MELSVAMYGLLCLLFSQAVP). 6 disulfide bridges follow: Cys-22–Cys-72, Cys-36–Cys-87, Cys-39–Cys-127, Cys-47–Cys-103, Cys-51–Cys-105, and Cys-108–Cys-115. Asn-43 carries N-linked (GlcNAc...) asparagine glycosylation.

It belongs to the glycoprotein hormones subunit beta family. In terms of assembly, heterodimer of a common alpha chain and a unique beta chain which confers biological specificity to thyrotropin, lutropin, follitropin and gonadotropin. Pituitary gland. Higher levels seen in immature fishes than the mature fishes.

The protein localises to the secreted. In terms of biological role, indispensable for the control of thyroid structure and metabolism. May play some role in the biological processes of the immature fishes. This is Thyrotropin subunit beta (tshb) from Oncorhynchus mykiss (Rainbow trout).